The chain runs to 343 residues: NADH-ubiquinone oxidoreductase chain 1 (343 aa).

8 consecutive transmembrane segments (helical) span residues 4-24 (LISIIGKYISCLPALLIVAFL), 70-90 (ANIILLFLGPIITLIFSLLGY), 106-126 (LGILYILAVSSLATYGILLAG), 154-174 (FYILLVILFTGSLNLTTIIES), 177-197 (VVYFILPLLPIFLIFFIGCIA), 224-244 (VIFMIFFFLAQYASIVLICIL), 278-298 (GLSSLNLAIKTAFLIFVFIWV), and 316-336 (TILLPIIIAYVVLLPCIVIGL).

The protein belongs to the complex I subunit 1 family.

It is found in the mitochondrion inner membrane. The enzyme catalyses a ubiquinone + NADH + 5 H(+)(in) = a ubiquinol + NAD(+) + 4 H(+)(out). Functionally, core subunit of the mitochondrial membrane respiratory chain NADH dehydrogenase (Complex I) that is believed to belong to the minimal assembly required for catalysis. Complex I functions in the transfer of electrons from NADH to the respiratory chain. The immediate electron acceptor for the enzyme is believed to be ubiquinone. This is NADH-ubiquinone oxidoreductase chain 1 (ND1) from Trichophyton rubrum (Athlete's foot fungus).